The following is a 246-amino-acid chain: Adenosine 5'-phosphosulfate reductase (246 aa).

4 residues coordinate [4Fe-4S] cluster: C131, C132, C214, and C217. Residue C242 is the Nucleophile; cysteine thiosulfonate intermediate of the active site.

This sequence belongs to the PAPS reductase family. CysH subfamily. The cofactor is [4Fe-4S] cluster.

It is found in the cytoplasm. The enzyme catalyses [thioredoxin]-disulfide + sulfite + AMP + 2 H(+) = adenosine 5'-phosphosulfate + [thioredoxin]-dithiol. The protein operates within sulfur metabolism; hydrogen sulfide biosynthesis; sulfite from sulfate. Catalyzes the formation of sulfite from adenosine 5'-phosphosulfate (APS) using thioredoxin as an electron donor. The protein is Adenosine 5'-phosphosulfate reductase of Neisseria meningitidis serogroup B (strain ATCC BAA-335 / MC58).